The chain runs to 122 residues: Large ribosomal subunit protein uL14 (122 aa).

Belongs to the universal ribosomal protein uL14 family. Part of the 50S ribosomal subunit. Forms a cluster with proteins L3 and L19. In the 70S ribosome, L14 and L19 interact and together make contacts with the 16S rRNA in bridges B5 and B8.

Its function is as follows. Binds to 23S rRNA. Forms part of two intersubunit bridges in the 70S ribosome. The protein is Large ribosomal subunit protein uL14 of Thermodesulfovibrio yellowstonii (strain ATCC 51303 / DSM 11347 / YP87).